The sequence spans 395 residues: D-alanine--D-alanine ligase (395 aa).

Positions 172–391 constitute an ATP-grasp domain; the sequence is KVVLGAAGIP…YTELITRLIE (220 aa). 204-266 provides a ligand contact to ATP; that stretch reads DAGLTYPLFI…EQGIDGREIE (63 aa). Residues D345, E358, and N360 each coordinate Mg(2+).

It belongs to the D-alanine--D-alanine ligase family. It depends on Mg(2+) as a cofactor. Mn(2+) serves as cofactor.

The protein localises to the cytoplasm. It carries out the reaction 2 D-alanine + ATP = D-alanyl-D-alanine + ADP + phosphate + H(+). It functions in the pathway cell wall biogenesis; peptidoglycan biosynthesis. In terms of biological role, cell wall formation. This Bifidobacterium longum subsp. infantis (strain ATCC 15697 / DSM 20088 / JCM 1222 / NCTC 11817 / S12) protein is D-alanine--D-alanine ligase.